Reading from the N-terminus, the 392-residue chain is Phospho-N-acetylmuramoyl-pentapeptide-transferase (392 aa).

The next 10 membrane-spanning stretches (helical) occupy residues 28 to 48 (IIAA…KLIA), 76 to 96 (TMGG…FADL), 101 to 121 (VWVM…DDWL), 137 to 157 (MVLQ…TWTL), 181 to 201 (WFNP…VVGT), 213 to 233 (GLAI…CYVA), 268 to 288 (GAEL…FLWF), 295 to 315 (VFMG…LAML), 320 to 340 (VVSA…MIQV), and 369 to 389 (KIIV…LLSL).

This sequence belongs to the glycosyltransferase 4 family. MraY subfamily. Requires Mg(2+) as cofactor.

The protein localises to the cell inner membrane. It catalyses the reaction UDP-N-acetyl-alpha-D-muramoyl-L-alanyl-gamma-D-glutamyl-meso-2,6-diaminopimeloyl-D-alanyl-D-alanine + di-trans,octa-cis-undecaprenyl phosphate = di-trans,octa-cis-undecaprenyl diphospho-N-acetyl-alpha-D-muramoyl-L-alanyl-D-glutamyl-meso-2,6-diaminopimeloyl-D-alanyl-D-alanine + UMP. It participates in cell wall biogenesis; peptidoglycan biosynthesis. Its function is as follows. Catalyzes the initial step of the lipid cycle reactions in the biosynthesis of the cell wall peptidoglycan: transfers peptidoglycan precursor phospho-MurNAc-pentapeptide from UDP-MurNAc-pentapeptide onto the lipid carrier undecaprenyl phosphate, yielding undecaprenyl-pyrophosphoryl-MurNAc-pentapeptide, known as lipid I. In Myxococcus xanthus (strain DK1622), this protein is Phospho-N-acetylmuramoyl-pentapeptide-transferase.